Here is a 1132-residue protein sequence, read N- to C-terminus: APC membrane recruitment protein 1 (1132 aa).

Met-1 carries the N-acetylmethionine modification. Residues 1–21 (MESQQDEAVQTKGASTSSDAQ) are compositionally biased toward polar residues. Disordered regions lie at residues 1–256 (MESQ…ACKN), 268–301 (FMQP…NPPN), 338–423 (SMTD…GEEN), 469–505 (GLGE…DSGE), 674–699 (TSGG…EPDW), 736–770 (MQEA…GNAT), 924–949 (ELQA…DSPL), and 1038–1132 (SQAS…NLAK). Positions 24 to 35 (GAEKGAKNKTTE) are enriched in basic and acidic residues. Residues 121 to 133 (SKSSAQFPSSQSA) show a composition bias toward low complexity. Basic and acidic residues-rich tracts occupy residues 195-208 (KELE…HEHV), 218-229 (EIFRDTRKENAK), and 281-290 (EEPHTSETEG). The span at 372–423 (ALPDDDDNDDEEEEEEEEEEEEEEEEEEEEEEEEEEEELLEDEEEVKDGEEN) shows a compositional bias: acidic residues. Composition is skewed to polar residues over residues 475–486 (TPQSDQQESAPN) and 677–696 (GSQT…SSSE). 2 stretches are compositionally biased toward acidic residues: residues 756–765 (EEPEEEEEEK) and 931–941 (DSDEEGEEEEG). Composition is skewed to polar residues over residues 1059-1072 (SCSS…QSQA) and 1115-1132 (ASLS…NLAK).

This sequence belongs to the Amer family. Interacts with CTNNB1, AXIN1, LRP6, KEAP1, APC and BTRC. Interacts with SCF (SKP1-CUL1-F-box protein) E3 ubiquitin-protein ligase complexes containing BTRC and/or FBXW11. Identified in the beta-catenin destruction complex containing CTNNB1, APC, AXIN1 and AXIN2. Interacts with WT1. In terms of tissue distribution, expressed in kidney.

It is found in the cytoplasm. Its subcellular location is the cell membrane. The protein resides in the nucleus. Its function is as follows. Regulator of the canonical Wnt signaling pathway. Acts by specifically binding phosphatidylinositol 4,5-bisphosphate (PtdIns(4,5)P2), translocating to the cell membrane and interacting with key regulators of the canonical Wnt signaling pathway, such as components of the beta-catenin destruction complex. Acts both as a positive and negative regulator of the Wnt signaling pathway, depending on the context: acts as a positive regulator by promoting LRP6 phosphorylation. Also acts as a negative regulator by acting as a scaffold protein for the beta-catenin destruction complex and promoting stabilization of Axin at the cell membrane. Promotes CTNNB1 ubiquitination and degradation. Involved in kidney development. This chain is APC membrane recruitment protein 1 (Amer1), found in Mus musculus (Mouse).